The chain runs to 191 residues: Signal peptidase complex catalytic subunit sec11 (191 aa).

Over 1–18 (MLSALGGNLSNARQSIAQ) the chain is Cytoplasmic. A helical; Signal-anchor for type II membrane protein transmembrane segment spans residues 19–39 (VLNFALVLSTAFMLWKGVSIA). The Lumenal portion of the chain corresponds to 40 to 191 (SNSSSPIVVV…MGLMVILQRE (152 aa)). A glycan (N-linked (GlcNAc...) asparagine) is linked at Asn41. Active-site charge relay system residues include Ser53, His92, and Asp133. The segment at 177–188 (VLLGVMGLMVIL) is C-terminal short (CTS) helix.

It belongs to the peptidase S26B family. Component of the signal peptidase complex (SPC) composed of a catalytic subunit SEC11 and three accessory subunits SPC1, SPC2 and SPC3. The complex induces a local thinning of the ER membrane which is used to measure the length of the signal peptide (SP) h-region of protein substrates. This ensures the selectivity of the complex towards h-regions shorter than 18-20 amino acids. SPC associates with the translocon complex.

It localises to the endoplasmic reticulum membrane. The enzyme catalyses Cleavage of hydrophobic, N-terminal signal or leader sequences from secreted and periplasmic proteins.. Functionally, catalytic component of the signal peptidase complex (SPC) which catalyzes the cleavage of N-terminal signal sequences from nascent proteins as they are translocated into the lumen of the endoplasmic reticulum. Specifically cleaves N-terminal signal peptides that contain a hydrophobic alpha-helix (h-region) shorter than 18-20 amino acids. The polypeptide is Signal peptidase complex catalytic subunit sec11 (sec11) (Talaromyces marneffei (strain ATCC 18224 / CBS 334.59 / QM 7333) (Penicillium marneffei)).